We begin with the raw amino-acid sequence, 367 residues long: Developmentally-regulated GTP-binding protein 1 (367 aa).

Serine 2 is modified (N-acetylserine). The required for interaction with STK16 stretch occupies residues 2–16; sequence SSTLAKIAEIEAEMA. A (3S)-3-hydroxylysine modification is found at lysine 22. The OBG-type G domain maps to 65–290; sequence ARIGFVGFPS…LLEKIWDYLK (226 aa). GTP contacts are provided by residues 71–78, 96–100, 117–120, 248–251, and 271–273; these read GFPSVGKS, FTTLT, DLPG, NKID, and SAH. Residues serine 78 and threonine 98 each coordinate Mg(2+). Phosphothreonine; by STK16 is present on threonine 100. A TGS domain is found at 290 to 366; it reads KLVRIYTKPK…EDEDVIQIVK (77 aa).

This sequence belongs to the TRAFAC class OBG-HflX-like GTPase superfamily. OBG GTPase family. In terms of assembly, interacts (via its C-terminal) with TAL1. Interacts with DFRP1/ZC3H15; this interaction prevents DRG1 poly-ubiquitination and degradation by proteasome. DRG1-ZC3H15/DFRP1 complex co-sediments with polysomes. Interacts with STK16. Interacts with JMJD7. Sumoylated by UBE2I in response to MEKK1-mediated stimuli. Post-translationally, hydroxylated (with S stereochemistry) at C-3 of Lys-22 by JMJD7. In terms of processing, phosphorylated at Thr-100 by STK16. Polyubiquitinated; this modification induces proteolytic degradation and is impaired by interaction with ZC3H15.

The protein localises to the nucleus. Its subcellular location is the cytoplasm. It catalyses the reaction GTP + H2O = GDP + phosphate + H(+). Its activity is regulated as follows. The GTPase activity is enhanced by potassium ions as well as by DFRP1 binding. In terms of biological role, catalyzes the conversion of GTP to GDP through hydrolysis of the gamma-phosphate bond in GTP. Appears to have an intrinsic GTPase activity that is stimulated by ZC3H15/DFRP1 binding likely by increasing the affinity for the potassium ions. When hydroxylated at C-3 of 'Lys-22' by JMJD7, may bind to RNA and play a role in translation. Binds to microtubules and promotes microtubule polymerization and bundling that are required for mitotic spindle assembly during prophase to anaphase transition. GTPase activity is not necessary for these microtubule-related functions. The polypeptide is Developmentally-regulated GTP-binding protein 1 (DRG1) (Bos taurus (Bovine)).